We begin with the raw amino-acid sequence, 591 residues long: Aspartate--tRNA(Asp/Asn) ligase (591 aa).

Glutamate 174 provides a ligand contact to L-aspartate. Positions 198–201 (QLFK) are aspartate. Arginine 220 lines the L-aspartate pocket. ATP-binding positions include 220–222 (RDE) and glutamine 229. Position 450 (histidine 450) interacts with L-aspartate. Residue glutamate 483 coordinates ATP. An L-aspartate-binding site is contributed by arginine 490. 535 to 538 (GLDR) contributes to the ATP binding site.

This sequence belongs to the class-II aminoacyl-tRNA synthetase family. Type 1 subfamily. In terms of assembly, homodimer.

Its subcellular location is the cytoplasm. The enzyme catalyses tRNA(Asx) + L-aspartate + ATP = L-aspartyl-tRNA(Asx) + AMP + diphosphate. Functionally, aspartyl-tRNA synthetase with relaxed tRNA specificity since it is able to aspartylate not only its cognate tRNA(Asp) but also tRNA(Asn). Reaction proceeds in two steps: L-aspartate is first activated by ATP to form Asp-AMP and then transferred to the acceptor end of tRNA(Asp/Asn). This chain is Aspartate--tRNA(Asp/Asn) ligase, found in Pseudomonas savastanoi pv. phaseolicola (strain 1448A / Race 6) (Pseudomonas syringae pv. phaseolicola (strain 1448A / Race 6)).